Here is a 181-residue protein sequence, read N- to C-terminus: Transmembrane protein 47 (181 aa).

Residue Ala2 is modified to N-acetylalanine. The next 4 membrane-spanning stretches (helical) occupy residues 21–41 (LVGL…VLSP), 83–103 (ALLL…LISI), 115–135 (VAVM…LYPI), and 152–172 (GYGL…LYCL).

This sequence belongs to the TMEM47 family. Interacts with CTNNB1, CTNNA1, PRKCI, PARD6B. Interacts with FYB1. Expressed in podocytes (at protein level).

The protein resides in the membrane. It is found in the cell junction. It localises to the adherens junction. Its function is as follows. Regulates cell junction organization in epithelial cells. May play a role in the transition from adherens junction to tight junction assembly. May regulate F-actin polymerization required for tight junctional localization dynamics and affect the junctional localization of PARD6B. During podocyte differentiation may negatively regulate activity of FYN and subsequently the abundance of nephrin. In Mus musculus (Mouse), this protein is Transmembrane protein 47 (Tmem47).